Here is an 891-residue protein sequence, read N- to C-terminus: Valine--tRNA ligase (891 aa).

A 'HIGH' region motif is present at residues P43–H53. Residues K536 to S540 carry the 'KMSKS' region motif. K539 contacts ATP.

It belongs to the class-I aminoacyl-tRNA synthetase family. ValS type 2 subfamily.

The protein resides in the cytoplasm. It carries out the reaction tRNA(Val) + L-valine + ATP = L-valyl-tRNA(Val) + AMP + diphosphate. Catalyzes the attachment of valine to tRNA(Val). As ValRS can inadvertently accommodate and process structurally similar amino acids such as threonine, to avoid such errors, it has a 'posttransfer' editing activity that hydrolyzes mischarged Thr-tRNA(Val) in a tRNA-dependent manner. This chain is Valine--tRNA ligase, found in Pyrococcus furiosus (strain ATCC 43587 / DSM 3638 / JCM 8422 / Vc1).